Reading from the N-terminus, the 291-residue chain is MKRVFLFLITNLAVILVLSFSARLLGVDRFLTSNGLDMGMLLAFAALIGFGGSFISLLMSKTMAKWSTGAQVILRPSNEEESWLLNTVRQLSKKADLAMPEVAIYEGAPNAFATGPSRSKSLVAVSSGLLRSMDRKQVEAVLAHEVAHIQNGDMVTLTLIQGVVNTFVIFLARVFAYALDSFLRRDEDESGSPGIGYWISSIAFEIVFGILASIVVMYFSRKREFRADAGAAALIGDRRPMIEALRALGSLEAGKLPKEMAASGIAGGGMMALFSSHPPLESRIAALESAR.

2 consecutive transmembrane segments (helical) span residues 4 to 24 and 38 to 58; these read VFLF…SARL and MGML…ISLL. Position 144 (His144) interacts with Zn(2+). Glu145 is an active-site residue. His148 contributes to the Zn(2+) binding site. 2 helical membrane-spanning segments follow: residues 159 to 179 and 199 to 219; these read LIQG…AYAL and ISSI…VMYF. Glu224 is a binding site for Zn(2+).

This sequence belongs to the peptidase M48B family. It depends on Zn(2+) as a cofactor.

It localises to the cell inner membrane. The protein is Protease HtpX homolog of Chlorobium phaeovibrioides (strain DSM 265 / 1930) (Prosthecochloris vibrioformis (strain DSM 265)).